Consider the following 304-residue polypeptide: MAFHKLVKNSAYYSRFQTKFKRRRQGKTDYYARKRLITQAKNKYNAPKYRLVVRFTNRDIITQMVTSEINGDKIFAAAYSHELRAYGINHGLTNWAAAYATGLLLARRVLAKLGLDKTFTGVEEPNGEYTLTEAAETEDGERRPFKAILDVGLARTSTGARVFGVMKGASDGGIFIPHSENRFPGYDIETEELDTEVLKKYIYGGHVAEYMETLADDDEERYKSQFVKYIEDDVEADSLEELYAEAHKQIRADPFRKYVSDAPKKSKEEWKAESLKYKKAKLSREERKARVEAKIKQLLAEQDE.

The protein belongs to the universal ribosomal protein uL18 family. In terms of assembly, component of a hexameric 5S RNP precursor complex, composed of 5S RNA, RRS1, RPF2, RPL5, RPL11 and SYO1; this complex acts as a precursor for ribosome assembly.

It is found in the cytoplasm. Component of the ribosome, a large ribonucleoprotein complex responsible for the synthesis of proteins in the cell. The small ribosomal subunit (SSU) binds messenger RNAs (mRNAs) and translates the encoded message by selecting cognate aminoacyl-transfer RNA (tRNA) molecules. The large subunit (LSU) contains the ribosomal catalytic site termed the peptidyl transferase center (PTC), which catalyzes the formation of peptide bonds, thereby polymerizing the amino acids delivered by tRNAs into a polypeptide chain. The nascent polypeptides leave the ribosome through a tunnel in the LSU and interact with protein factors that function in enzymatic processing, targeting, and the membrane insertion of nascent chains at the exit of the ribosomal tunnel. This Chaetomium thermophilum (strain DSM 1495 / CBS 144.50 / IMI 039719) (Thermochaetoides thermophila) protein is Large ribosomal subunit protein uL18.